The chain runs to 257 residues: UPF0246 protein RHOS4_29700 (257 aa).

It belongs to the UPF0246 family.

In Cereibacter sphaeroides (strain ATCC 17023 / DSM 158 / JCM 6121 / CCUG 31486 / LMG 2827 / NBRC 12203 / NCIMB 8253 / ATH 2.4.1.) (Rhodobacter sphaeroides), this protein is UPF0246 protein RHOS4_29700.